A 175-amino-acid chain; its full sequence is Orotate phosphoribosyltransferase (175 aa).

5-phospho-alpha-D-ribose 1-diphosphate-binding positions include R89, K90, K93, and 115 to 123; that span reads EDIATTGQS. Residues T119 and R147 each coordinate orotate.

It belongs to the purine/pyrimidine phosphoribosyltransferase family. PyrE subfamily. Homodimer. It depends on Mg(2+) as a cofactor.

The catalysed reaction is orotidine 5'-phosphate + diphosphate = orotate + 5-phospho-alpha-D-ribose 1-diphosphate. Its pathway is pyrimidine metabolism; UMP biosynthesis via de novo pathway; UMP from orotate: step 1/2. Functionally, catalyzes the transfer of a ribosyl phosphate group from 5-phosphoribose 1-diphosphate to orotate, leading to the formation of orotidine monophosphate (OMP). The chain is Orotate phosphoribosyltransferase from Halobacterium salinarum (strain ATCC 700922 / JCM 11081 / NRC-1) (Halobacterium halobium).